A 383-amino-acid chain; its full sequence is D-alanine--D-alanine ligase (383 aa).

The ATP-grasp domain maps to 169-373 (KALLRAAGLP…YPQLVDRLVR (205 aa)). 196-251 (QERLGLPVFVKPARGGSSIGISRVEAWADLDTAIKAARASDPKVLVESAIVGREIE) contacts ATP. Residues Asp-327, Glu-340, and Asn-342 each coordinate Mg(2+).

It belongs to the D-alanine--D-alanine ligase family. Mg(2+) serves as cofactor. Mn(2+) is required as a cofactor.

The protein resides in the cytoplasm. The enzyme catalyses 2 D-alanine + ATP = D-alanyl-D-alanine + ADP + phosphate + H(+). Its pathway is cell wall biogenesis; peptidoglycan biosynthesis. Cell wall formation. This chain is D-alanine--D-alanine ligase, found in Frankia casuarinae (strain DSM 45818 / CECT 9043 / HFP020203 / CcI3).